Consider the following 494-residue polypeptide: Metalloprotease TIKI1 (494 aa).

Positions 1 to 25 (MTMMTMMMVSWSAFLQICWILMVRA) are cleaved as a signal peptide. Residues 26-467 (NQFNPGEPSG…QEHERANHDR (442 aa)) lie on the Extracellular side of the membrane. N-linked (GlcNAc...) asparagine glycans are attached at residues N234 and N282. The helical transmembrane segment at 468 to 488 (TFSGSSSRTGPALSALAVCVQ) threads the bilayer. Topologically, residues 489–494 (MLRLLL) are cytoplasmic.

This sequence belongs to the TIKI family. Mn(2+) serves as cofactor. Requires Co(2+) as cofactor.

It is found in the cell membrane. Its function is as follows. Metalloprotease that acts as a negative regulator of the Wnt signaling pathway by mediating the cleavage of the N-terminal residues of a subset of Wnt proteins. Following cleavage, Wnt proteins become oxidized and form large disulfide-bond oligomers, leading to their inactivation. This chain is Metalloprotease TIKI1 (trabd2a), found in Danio rerio (Zebrafish).